The primary structure comprises 127 residues: Apolipoprotein C-IV (127 aa).

The first 27 residues, 1–27 (MSLLRNRLQALPALCLCVLVLACIGAC), serve as a signal peptide directing secretion. Asn-63 carries N-linked (GlcNAc...) asparagine glycosylation.

It belongs to the apolipoprotein C4 family. As to expression, expressed by the liver and secreted in plasma.

The protein localises to the secreted. Its function is as follows. May participate in lipoprotein metabolism. This is Apolipoprotein C-IV (APOC4) from Homo sapiens (Human).